The chain runs to 2602 residues: Filamin-B (2602 aa).

The segment at 1 to 239 is actin-binding; that stretch reads MPVTEKDLAE…VMTYLSQFPK (239 aa). Calponin-homology (CH) domains are found at residues 16–122 and 139–242; these read KIQQ…LHYS and QTPK…KAKL. Phosphothreonine is present on threonine 216. Positions 244–267 are disordered; sequence PGAPLKPKLNPKKARAYGRGIEPT. 15 Filamin repeats span residues 249-347, 349-446, 447-543, 544-636, 640-736, 737-839, 840-938, 939-1034, 1035-1127, 1128-1222, 1223-1322, 1323-1415, 1416-1511, 1512-1608, and 1609-1704; these read KPKL…EVNV, KAQG…GVQI, GEAC…EVQV, GPEA…MAFI, TGDY…RVNI, GQGS…RVKV, DPSH…TVGV, AAPL…TVEA, SLPP…KADI, EMPF…WVKV, EPAI…KVAV, TEGC…RVPS, KDVV…KVKV, LPTY…RIRA, and TQTG…TVMA. Threonine 519 is subject to Phosphothreonine. Position 681 is an N6-acetyllysine (lysine 681). Serine 730 bears the Phosphoserine mark. A compositionally biased stretch (basic and acidic residues) spans 837 to 850; sequence VKVDPSHDASKVKA. A disordered region spans residues 837 to 862; the sequence is VKVDPSHDASKVKAEGPGLSKAGVEN. 4 positions are modified to phosphoserine: serine 886, serine 932, serine 983, and serine 1028. Residue threonine 1307 is modified to Phosphothreonine. A Phosphoserine modification is found at serine 1316. Residues serine 1433, serine 1505, and serine 1602 each carry the phosphoserine modification. The interval 1705 to 1728 is hinge 1; that stretch reads TDGEVTAMEEAPVNACPPGFRPWV. 8 Filamin repeats span residues 1729-1813, 1816-1908, 1919-1994, 1997-2089, 2091-2185, 2188-2280, 2282-2375, and 2379-2471; these read TEEA…SPLQ, VNYP…TAKI, KLGS…SIMV, SEIG…TVKI, GEGR…QFTV, LGEG…LVPV, APSD…KVRV, and GQAG…KAKV. Lysine 1780 carries the N6-acetyllysine modification. 2 positions are modified to phosphoserine: serine 2083 and serine 2113. A phosphoserine mark is found at serine 2369 and serine 2465. Lysine 2468 is covalently cross-linked (Glycyl lysine isopeptide (Lys-Gly) (interchain with G-Cter in ISG15)). The tract at residues 2472-2506 is hinge 2; sequence TGQRLVSPGSANETSSILVESVTRSSTETCYSAIP. The interval 2472 to 2602 is self-association site, tail; it reads TGQRLVSPGS…PGSPFHVTVP (131 aa). 3 positions are modified to phosphoserine: serine 2478, serine 2481, and serine 2492. Residues 2507-2601 form a Filamin 24 repeat; it reads KSSSDASKVT…IPGSPFHVTV (95 aa). N6-succinyllysine is present on residues lysine 2518 and lysine 2524. Position 2576 is an N6-acetyllysine (lysine 2576).

This sequence belongs to the filamin family. As to quaternary structure, homodimer. Interacts with FLNA, FLNC, INPPL1, ITGB1A, ITGB1D, ITGB3, ITGB6, MYOT, MYOZ1, PSEN1 and PSEN2. Interacts with MICALL2. Interacts with RFLNA and RFLNB. Interacts with ASB2 isoform 1; the interaction targets FLNB for proteasomal degradation. In terms of processing, ISGylation prevents ability to interact with the upstream activators of the JNK cascade and inhibits IFNA-induced JNK signaling. Post-translationally, ubiquitination by a SCF-like complex containing ASB2 isoform 1 leads to proteasomal degradation which promotes muscle differentiation. As to expression, expressed in hippocampus, cortex, cerebellar Purkinje cells and granule cell layers.

It localises to the cytoplasm. Its subcellular location is the cell cortex. It is found in the cytoskeleton. The protein localises to the stress fiber. The protein resides in the myofibril. It localises to the sarcomere. Its subcellular location is the z line. Functionally, connects cell membrane constituents to the actin cytoskeleton. May promote orthogonal branching of actin filaments and links actin filaments to membrane glycoproteins. Anchors various transmembrane proteins to the actin cytoskeleton. The chain is Filamin-B (Flnb) from Mus musculus (Mouse).